A 245-amino-acid polypeptide reads, in one-letter code: tRNA pseudouridine synthase A (245 aa).

Aspartate 52 serves as the catalytic Nucleophile. Tyrosine 111 is a binding site for substrate.

Belongs to the tRNA pseudouridine synthase TruA family. Homodimer.

It catalyses the reaction uridine(38/39/40) in tRNA = pseudouridine(38/39/40) in tRNA. Functionally, formation of pseudouridine at positions 38, 39 and 40 in the anticodon stem and loop of transfer RNAs. This Bradyrhizobium sp. (strain BTAi1 / ATCC BAA-1182) protein is tRNA pseudouridine synthase A.